The following is a 495-amino-acid chain: Probable endopolygalacturonase D (495 aa).

The signal sequence occupies residues Met-1–Gly-16. Residues Cys-154 and Cys-169 are joined by a disulfide bond. PbH1 repeat units follow at residues Met-261–Asn-283, Thr-284–Gln-322, and Ser-323–Ser-344. N-linked (GlcNAc...) asparagine glycosylation is present at Asn-295. The active-site Proton donor is Asp-337. Cysteines 339 and 355 form a disulfide. The active site involves His-359. The N-linked (GlcNAc...) asparagine glycan is linked to Asn-371. 2 PbH1 repeats span residues Val-374–Ser-395 and Val-403–Gln-425. 2 N-linked (GlcNAc...) asparagine glycosylation sites follow: Asn-410 and Asn-444. Intrachain disulfides connect Cys-464–Cys-469 and Cys-487–Cys-494. One copy of the PbH1 6 repeat lies at Cys-469–Ser-492.

The protein belongs to the glycosyl hydrolase 28 family.

The protein localises to the secreted. It carries out the reaction (1,4-alpha-D-galacturonosyl)n+m + H2O = (1,4-alpha-D-galacturonosyl)n + (1,4-alpha-D-galacturonosyl)m.. Functionally, involved in maceration and soft-rotting of plant tissue. Hydrolyzes the 1,4-alpha glycosidic bonds of de-esterified pectate in the smooth region of the plant cell wall. The polypeptide is Probable endopolygalacturonase D (pgaD) (Aspergillus niger (strain ATCC MYA-4892 / CBS 513.88 / FGSC A1513)).